A 221-amino-acid chain; its full sequence is Iron-sulfur cluster repair protein YtfE (221 aa).

Belongs to the RIC family. YtfE subfamily. Homodimer.

The protein localises to the cytoplasm. Functionally, di-iron-containing protein involved in the repair of iron-sulfur clusters damaged by oxidative and nitrosative stress conditions. This is Iron-sulfur cluster repair protein YtfE from Cronobacter sakazakii (strain ATCC BAA-894) (Enterobacter sakazakii).